The sequence spans 329 residues: uncharacterized protein (329 aa).

Coiled-coil stretches lie at residues 57 to 119 (KKEE…LQEV) and 224 to 250 (AQRQ…LGNV).

This is an uncharacterized protein from Macaca fascicularis (Crab-eating macaque).